Reading from the N-terminus, the 329-residue chain is Putative dehydrogenase RB0419 (329 aa).

The protein belongs to the ornithine cyclodeaminase/mu-crystallin family.

The chain is Putative dehydrogenase RB0419 from Rhizobium meliloti (strain 1021) (Ensifer meliloti).